The chain runs to 657 residues: Serine/threonine-protein kinase BUR1 (657 aa).

Residues 60–366 (YREDEKLGQG…AMSAKHHPWF (307 aa)) enclose the Protein kinase domain. Residues 66 to 74 (LGQGTFGEV) and Lys-89 contribute to the ATP site. Catalysis depends on Asp-195, which acts as the Proton acceptor. Thr-240 carries the phosphothreonine; by CAK modification. Ser-400 is modified (phosphoserine). Phosphothreonine is present on Thr-405. Residues 414 to 657 (KGESPVVKNL…FQNSDIADLY (244 aa)) form a disordered region. Ser-417 bears the Phosphoserine mark. The segment covering 489 to 501 (NNSSRNNRFSGNS) has biased composition (low complexity). Composition is skewed to polar residues over residues 535–552 (SRYQGNSNESRYKNSPND), 564–595 (PETNFNRQPQKYSRQESNAPINKNYNPSNGSR), and 614–625 (ISPSQGQHQLTS). Positions 627–649 (PIEKKNGSFKDERAKPDESKEFQ) are enriched in basic and acidic residues. Ser-634 is modified (phosphoserine).

This sequence belongs to the protein kinase superfamily. CMGC Ser/Thr protein kinase family. CDC2/CDKX subfamily. As to quaternary structure, belongs to the BUR kinase complex composed of SGV1/BUR1 and BUR2. Interacts with BUR2 and RBP1.

The protein localises to the nucleus. The enzyme catalyses L-seryl-[protein] + ATP = O-phospho-L-seryl-[protein] + ADP + H(+). It carries out the reaction L-threonyl-[protein] + ATP = O-phospho-L-threonyl-[protein] + ADP + H(+). It catalyses the reaction [DNA-directed RNA polymerase] + ATP = phospho-[DNA-directed RNA polymerase] + ADP + H(+). In terms of biological role, serine/threonine-protein kinase component of the BUR kinase complex involved in transcription regulation. This complex phosphorylates 'Ser-120' of the UBC2/RAD6 ubiquitin-conjugating enzyme (E2), leading to monoubiquitination of histone H2B, the localization of the PAF1 complex to the chromatin, and the silencing of telomeric-associated genes. Also required for histone H3 'Lys-4' trimethylation. May phosphorylate the 'Ser-5' of the RBP1 carboxy-terminal domain (CTD) repeats. Necessary for the recovery from pheromone-induced growth arrest in the cell cycle G1 phase. The kinase activity of the complex requires the presence of BUR2. This is Serine/threonine-protein kinase BUR1 (SGV1) from Saccharomyces cerevisiae (strain ATCC 204508 / S288c) (Baker's yeast).